Here is a 73-residue protein sequence, read N- to C-terminus: Putative beta-defensin 108A (73 aa).

Positions 1–22 (MRIAVLFFTIFFFMSQVLPAKG) are cleaved as a signal peptide. 3 disulfide bridges follow: Cys-28-Cys-55, Cys-35-Cys-49, and Cys-39-Cys-56.

Belongs to the beta-defensin family.

The protein resides in the secreted. Has antibacterial activity. The polypeptide is Putative beta-defensin 108A (Homo sapiens (Human)).